Here is a 480-residue protein sequence, read N- to C-terminus: MTADMLSHDLSLLIPELVLAGGAMALLMLGVFLKGDGTEKLVQWLTVGLLAAAALAALFLVSGEGMAFNDSFVFDSLARFSKTAIGLVAAIAMLLAMPYLQAEKLGKIEYPVLVVLAVTGMMMMVSANDLIAMYMGIELQSLALYVLAAFNRDSLRASEAGLKYFVLGALSSGLLLYGASLVYGFAGSTGFGDIALAVESGSNIGLTVGLVFVICGLAFKVSAAPFHMWTPDVYEGAPTPVTAFFATAPKFAAIVLLARVLMEPFGAVVDQWRDVIWMIAVLSMAVGAFGALTQQNIKRLMAYSSISNMGYALVAVAAASQTGLWALLVFMVLYMVGAIGSFATILSMRTREGMVEQISDLAGLAQRNPGLGWSMTALMFSIGGLPFMVGFFGKFFVIYAAVQADLMILAVLAVLFSVVGAAYYLRIVKVIWFDSSEIEFVPSAVSTYWIARIAGLATVLLLPVLGWLVFRAYSVGLALL.

The next 14 helical transmembrane spans lie at 12 to 32, 41 to 61, 80 to 100, 105 to 125, 130 to 150, 165 to 185, 204 to 224, 237 to 257, 275 to 295, 300 to 320, 326 to 346, 372 to 392, 406 to 428, and 450 to 470; these read LLIPELVLAGGAMALLMLGVF, LVQWLTVGLLAAAALAALFLV, FSKTAIGLVAAIAMLLAMPYL, LGKIEYPVLVVLAVTGMMMMV, LIAMYMGIELQSLALYVLAAF, FVLGALSSGLLLYGASLVYGF, IGLTVGLVFVICGLAFKVSAA, APTPVTAFFATAPKFAAIVLL, VIWMIAVLSMAVGAFGALTQQ, LMAYSSISNMGYALVAVAAAS, ALLVFMVLYMVGAIGSFATIL, GWSMTALMFSIGGLPFMVGFF, LMILAVLAVLFSVVGAAYYLRIV, and IARIAGLATVLLLPVLGWLVF.

It belongs to the complex I subunit 2 family. As to quaternary structure, NDH-1 is composed of 14 different subunits. Subunits NuoA, H, J, K, L, M, N constitute the membrane sector of the complex.

It localises to the cell inner membrane. The enzyme catalyses a quinone + NADH + 5 H(+)(in) = a quinol + NAD(+) + 4 H(+)(out). NDH-1 shuttles electrons from NADH, via FMN and iron-sulfur (Fe-S) centers, to quinones in the respiratory chain. The immediate electron acceptor for the enzyme in this species is believed to be ubiquinone. Couples the redox reaction to proton translocation (for every two electrons transferred, four hydrogen ions are translocated across the cytoplasmic membrane), and thus conserves the redox energy in a proton gradient. This is NADH-quinone oxidoreductase subunit N from Maricaulis maris (strain MCS10) (Caulobacter maris).